The primary structure comprises 166 residues: MIPLRCSSAYSLLIEYCATIRDPCEETYTSRGDHNLSISISLFDQKLEQFHVSLSHATVLVNQSLLPNDACPIQPGILRAISVDAKNLPCVDFPHLCRARGGCLAHHIEYEFVPFAYTERGDTEYMIVVETLGDDADIQFRKFIVMYQRIIAATWKHLCPQTFDCL.

Part of the gene cluster that mediates the biosynthesis of PR-toxin, a bicyclic sesquiterpene belonging to the eremophilane class and acting as a mycotoxin. The first step of the pathway is catalyzed by the aristolochene synthase which performs the cyclization of trans,trans-farnesyl diphosphate (FPP) to the bicyclic sesquiterpene aristolochene. Following the formation of aristolochene, the non-oxygenated aristolochene is converted to the trioxygenated intermediate eremofortin B, via 7-epi-neopetasone. This conversion appears to involve three enzymes, a hydroxysterol oxidase-like enzyme, the quinone-oxidase prx3 that forms the quinone-type-structure in the bicyclic nucleus of aristolochene with the C8-oxo group and the C-3 hydroxyl group, and the P450 monooxygenase prx9 that introduces the epoxide at the double bond between carbons 1 and 2. No monoxy or dioxy-intermediates have been reported to be released to the broth, so these three early oxidative reactions may be coupled together. Eremofortin B is further oxidized by another P450 monooxygenase, that introduces a second epoxide between carbons 7 and 11 prior to acetylation to eremofortin A by the acetyltransferase prx11. The second epoxidation may be performed by a second P450 monooxygenase. After the acetylation step, eremofortin A is converted to eremofortin C and then to PR-toxin. First the conversion of eremofortin A to eremofortin C proceeds by oxidation of the side chain of the molecule at C-12 and is catalyzed by the short-chain oxidoreductase prx1. The cytochrome P450 monooxygenase prx8 also plays a role in this step. The primary alcohol formed at C-12 is finally oxidized by the short-chain alcohol dehydrogenase prx4 that forms PR-toxin. In Penicillium rubens (strain ATCC 28089 / DSM 1075 / NRRL 1951 / Wisconsin 54-1255) (Penicillium chrysogenum), this protein is PR-toxin biosynthesis cluster protein 10.